The following is a 77-amino-acid chain: Acyl carrier protein (77 aa).

One can recognise a Carrier domain in the interval 2–77 (ADTLSRITKI…DVVEYIEGRQ (76 aa)). An O-(pantetheine 4'-phosphoryl)serine modification is found at S37.

This sequence belongs to the acyl carrier protein (ACP) family. Post-translationally, 4'-phosphopantetheine is transferred from CoA to a specific serine of apo-ACP by AcpS. This modification is essential for activity because fatty acids are bound in thioester linkage to the sulfhydryl of the prosthetic group.

It localises to the cytoplasm. It functions in the pathway lipid metabolism; fatty acid biosynthesis. In terms of biological role, carrier of the growing fatty acid chain in fatty acid biosynthesis. The chain is Acyl carrier protein from Halalkalibacterium halodurans (strain ATCC BAA-125 / DSM 18197 / FERM 7344 / JCM 9153 / C-125) (Bacillus halodurans).